Consider the following 122-residue polypeptide: MIQMQTNLDVADNSGARRVQCIKVLGGSHRRYAGIGDIIKVTVKEAIPRGKVKKGDVLNAVVVRTRKGVRRADGSTIRFDGNAAVMLNANKQPIGTRIFGPVTRELRSENFMKIISLAPEVL.

Belongs to the universal ribosomal protein uL14 family. In terms of assembly, part of the 50S ribosomal subunit. Forms a cluster with proteins L3 and L19. In the 70S ribosome, L14 and L19 interact and together make contacts with the 16S rRNA in bridges B5 and B8.

Its function is as follows. Binds to 23S rRNA. Forms part of two intersubunit bridges in the 70S ribosome. This is Large ribosomal subunit protein uL14 from Alteromonas mediterranea (strain DSM 17117 / CIP 110805 / LMG 28347 / Deep ecotype).